A 142-amino-acid chain; its full sequence is Large ribosomal subunit protein uL13 (142 aa).

The protein belongs to the universal ribosomal protein uL13 family. Part of the 50S ribosomal subunit.

Functionally, this protein is one of the early assembly proteins of the 50S ribosomal subunit, although it is not seen to bind rRNA by itself. It is important during the early stages of 50S assembly. The chain is Large ribosomal subunit protein uL13 from Dechloromonas aromatica (strain RCB).